Consider the following 296-residue polypeptide: Lipoyl synthase (296 aa).

Cysteine 35, cysteine 40, cysteine 46, cysteine 61, cysteine 65, cysteine 68, and serine 274 together coordinate [4Fe-4S] cluster. Residues 47 to 263 form the Radical SAM core domain; the sequence is WSSKHVTVMI…KEAAYARGFL (217 aa).

This sequence belongs to the radical SAM superfamily. Lipoyl synthase family. [4Fe-4S] cluster is required as a cofactor.

It localises to the cytoplasm. The catalysed reaction is [[Fe-S] cluster scaffold protein carrying a second [4Fe-4S](2+) cluster] + N(6)-octanoyl-L-lysyl-[protein] + 2 oxidized [2Fe-2S]-[ferredoxin] + 2 S-adenosyl-L-methionine + 4 H(+) = [[Fe-S] cluster scaffold protein] + N(6)-[(R)-dihydrolipoyl]-L-lysyl-[protein] + 4 Fe(3+) + 2 hydrogen sulfide + 2 5'-deoxyadenosine + 2 L-methionine + 2 reduced [2Fe-2S]-[ferredoxin]. It functions in the pathway protein modification; protein lipoylation via endogenous pathway; protein N(6)-(lipoyl)lysine from octanoyl-[acyl-carrier-protein]: step 2/2. In terms of biological role, catalyzes the radical-mediated insertion of two sulfur atoms into the C-6 and C-8 positions of the octanoyl moiety bound to the lipoyl domains of lipoate-dependent enzymes, thereby converting the octanoylated domains into lipoylated derivatives. The sequence is that of Lipoyl synthase from Neorickettsia sennetsu (strain ATCC VR-367 / Miyayama) (Ehrlichia sennetsu).